The following is a 689-amino-acid chain: Pentatricopeptide repeat-containing protein At1g71460, chloroplastic (689 aa).

A chloroplast-targeting transit peptide spans 1 to 49 (MEVVSSLGIRDLPASLSVTTSLNHRPHRSDKDGAPAKSPIRPSRTRRPS). The interval 16–68 (LSVTTSLNHRPHRSDKDGAPAKSPIRPSRTRRPSTSPAKKPKPFRERDAFPSS) is disordered. Low complexity predominate over residues 38 to 52 (SPIRPSRTRRPSTSP). 18 PPR repeats span residues 75 to 109 (NPYIIHRDIQIFARQNNLEVALTILDYLEQRGIPV), 110 to 144 (NATTFSALLEACVRRKSLLHGKQVHVHIRINGLES), 145 to 175 (NEFLRTKLVHMYTACGSVKDAQKVFDESTSS), 176 to 212 (NVYSWNALLRGTVISGKKRYQDVLSTFTEMRELGVDL), 213 to 247 (NVYSLSNVFKSFAGASALRQGLKTHALAIKNGLFN), 248 to 282 (SVFLKTSLVDMYFKCGKVGLARRVFDEIVERDIVV), 283 to 309 (WGAMIAGLAHNKRQWEALGLFRTMISE), 315 to 350 (NSVILTTILPVLGDVKALKLGKEVHAHVLKSKNYVE), 351 to 381 (QPFVHSGLIDLYCKCGDMASGRRVFYGSKQR), 382 to 416 (NAISWTALMSGYAANGRFDQALRSIVWMQQEGFRP), 417 to 451 (DVVTIATVLPVCAELRAIKQGKEIHCYALKNLFLP), 452 to 482 (NVSLVTSLMVMYSKCGVPEYPIRLFDRLEQR), 483 to 517 (NVKAWTAMIDCYVENCDLRAGIEVFRLMLLSKHRP), 518 to 552 (DSVTMGRVLTVCSDLKALKLGKELHGHILKKEFES), 553 to 583 (IPFVSARIIKMYGKCGDLRSANFSFDAVAVK), 584 to 618 (GSLTWTAIIEAYGCNELFRDAINCFEQMVSRGFTP), 619 to 649 (NTFTFTAVLSICSQAGFVDEAYRFFNLMLRM), and 655 to 689 (SEEHYSLVIELLNRCGRVEEAQRLAVMSSSSSLQT).

This sequence belongs to the PPR family. PCMP-A subfamily.

The protein localises to the plastid. Its subcellular location is the chloroplast. The sequence is that of Pentatricopeptide repeat-containing protein At1g71460, chloroplastic (PCMP-A3) from Arabidopsis thaliana (Mouse-ear cress).